A 413-amino-acid chain; its full sequence is Arginine biosynthesis bifunctional protein ArgJ (413 aa).

6 residues coordinate substrate: T160, K186, T197, E284, N408, and S413. The active-site Nucleophile is the T197.

The protein belongs to the ArgJ family. As to quaternary structure, heterotetramer of two alpha and two beta chains.

The protein localises to the cytoplasm. It carries out the reaction N(2)-acetyl-L-ornithine + L-glutamate = N-acetyl-L-glutamate + L-ornithine. The enzyme catalyses L-glutamate + acetyl-CoA = N-acetyl-L-glutamate + CoA + H(+). Its pathway is amino-acid biosynthesis; L-arginine biosynthesis; L-ornithine and N-acetyl-L-glutamate from L-glutamate and N(2)-acetyl-L-ornithine (cyclic): step 1/1. It participates in amino-acid biosynthesis; L-arginine biosynthesis; N(2)-acetyl-L-ornithine from L-glutamate: step 1/4. In terms of biological role, catalyzes two activities which are involved in the cyclic version of arginine biosynthesis: the synthesis of N-acetylglutamate from glutamate and acetyl-CoA as the acetyl donor, and of ornithine by transacetylation between N(2)-acetylornithine and glutamate. The chain is Arginine biosynthesis bifunctional protein ArgJ from Burkholderia pseudomallei (strain 1710b).